We begin with the raw amino-acid sequence, 232 residues long: MAKDEAKGLLKSEELYKYILETSVYPREPEVLRELRNITHNHPQAGMATAPDAGQLMGMLLNLVNARKTIEVGVFTGYSLLLTALTLPEDGKVIAIDMNRDSYEIGLPVIKKAGVEHKIDFKESEALPALDELLNNKVNEGGFDFAFVDADKLNYWNYHERLIRLIKVGGIIVYDNTLWGGSVAEPDSSTPEWRIEVKKATLELNKKLSADQRVQISQAALGDGITICRRLY.

Lys-7 provides a ligand contact to substrate. Residues Thr-49, Glu-71, 73–74 (GV), Ser-79, Asp-97, and Ala-126 contribute to the S-adenosyl-L-methionine site. Asp-149 contributes to the substrate binding site. Asp-149 lines the a divalent metal cation pocket. Asp-151 provides a ligand contact to S-adenosyl-L-methionine. A divalent metal cation-binding residues include Asp-175 and Asn-176.

The protein belongs to the class I-like SAM-binding methyltransferase superfamily. Cation-dependent O-methyltransferase family. CCoAMT subfamily. A divalent metal cation is required as a cofactor.

The enzyme catalyses (E)-caffeoyl-CoA + S-adenosyl-L-methionine = (E)-feruloyl-CoA + S-adenosyl-L-homocysteine + H(+). It participates in aromatic compound metabolism; phenylpropanoid biosynthesis. Methylates caffeoyl-CoA to feruloyl-CoA and 5-hydroxyferuloyl-CoA to sinapoyl-CoA. Plays a role in the synthesis of feruloylated polysaccharides. Involved in the reinforcement of the plant cell wall. Also involved in the responding to wounding or pathogen challenge by the increased formation of cell wall-bound ferulic acid polymers. This Arabidopsis thaliana (Mouse-ear cress) protein is Probable caffeoyl-CoA O-methyltransferase At4g26220.